We begin with the raw amino-acid sequence, 60 residues long: Large ribosomal subunit protein bL32 (60 aa).

A compositionally biased stretch (basic residues) spans 1–19; it reads MGVPKRKTSKGRRDKRRAH. A disordered region spans residues 1–20; sequence MGVPKRKTSKGRRDKRRAHL.

This sequence belongs to the bacterial ribosomal protein bL32 family.

This chain is Large ribosomal subunit protein bL32, found in Syntrophobacter fumaroxidans (strain DSM 10017 / MPOB).